Here is a 347-residue protein sequence, read N- to C-terminus: UDP-glucose 4-epimerase (347 aa).

Residues 11–13 (GYI), 32–36 (DNFHN), 65–66 (DI), phenylalanine 87, and lysine 91 each bind NAD(+). Residue 131 to 133 (SAT) coordinates substrate. Tyrosine 156 (proton acceptor) is an active-site residue. NAD(+)-binding residues include lysine 160 and tyrosine 184. Substrate contacts are provided by residues 184–186 (YFN), 205–207 (NNL), 223–225 (NVF), arginine 238, and 299–302 (REGD).

This sequence belongs to the NAD(P)-dependent epimerase/dehydratase family. In terms of assembly, homodimer. Requires NAD(+) as cofactor.

It carries out the reaction UDP-alpha-D-glucose = UDP-alpha-D-galactose. It catalyses the reaction UDP-N-acetyl-alpha-D-glucosamine = UDP-N-acetyl-alpha-D-galactosamine. It functions in the pathway carbohydrate metabolism; galactose metabolism. Its function is as follows. Catalyzes two distinct but analogous reactions: the reversible epimerization of UDP-glucose to UDP-galactose and the reversible epimerization of UDP-N-acetylglucosamine to UDP-N-acetylgalactosamine. The reaction with UDP-Gal plays a critical role in the Leloir pathway of galactose catabolism in which galactose is converted to the glycolytic intermediate glucose 6-phosphate. It contributes to the catabolism of dietary galactose and enables the endogenous biosynthesis of both UDP-Gal and UDP-GalNAc when exogenous sources are limited. Both UDP-sugar interconversions are important in the synthesis of glycoproteins and glycolipids. This chain is UDP-glucose 4-epimerase (Gale), found in Mus musculus (Mouse).